Here is a 109-residue protein sequence, read N- to C-terminus: Ubiquitin-related modifier 1 homolog (109 aa).

G109 carries the 1-thioglycine modification. G109 is covalently cross-linked (Glycyl lysine isopeptide (Gly-Lys) (interchain with K-? in acceptor proteins)).

Belongs to the URM1 family. In terms of processing, C-terminal thiocarboxylation occurs in 2 steps, it is first acyl-adenylated (-COAMP) via the hesA/moeB/thiF part of the MOCS3 homolog, then thiocarboxylated (-COSH) via the rhodanese domain of the MOCS3 homolog.

The protein localises to the cytoplasm. It functions in the pathway tRNA modification; 5-methoxycarbonylmethyl-2-thiouridine-tRNA biosynthesis. In terms of biological role, acts as a sulfur carrier required for 2-thiolation of mcm(5)S(2)U at tRNA wobble positions of cytosolic tRNA(Lys), tRNA(Glu) and tRNA(Gln). Serves as sulfur donor in tRNA 2-thiolation reaction by being thiocarboxylated (-COSH) at its C-terminus by MOCS3. The sulfur is then transferred to tRNA to form 2-thiolation of mcm(5)S(2)U. Also acts as a ubiquitin-like protein (UBL) that is covalently conjugated via an isopeptide bond to lysine residues of target proteins. The thiocarboxylated form serves as substrate for conjugation and oxidative stress specifically induces the formation of UBL-protein conjugates. The chain is Ubiquitin-related modifier 1 homolog from Culex quinquefasciatus (Southern house mosquito).